The chain runs to 249 residues: tRNA uridine(34) hydroxylase (249 aa).

One can recognise a Rhodanese domain in the interval 124–218 (TKQDVIVIDT…YLEDTQNKNN (95 aa)). The active-site Cysteine persulfide intermediate is the Cys-178.

It belongs to the TrhO family.

The catalysed reaction is uridine(34) in tRNA + AH2 + O2 = 5-hydroxyuridine(34) in tRNA + A + H2O. Functionally, catalyzes oxygen-dependent 5-hydroxyuridine (ho5U) modification at position 34 in tRNAs. The sequence is that of tRNA uridine(34) hydroxylase from Rickettsia canadensis (strain McKiel).